Here is a 145-residue protein sequence, read N- to C-terminus: Basic phospholipase A2 cPm05 (145 aa).

An N-terminal signal peptide occupies residues 1-21 (MYPAHLLVLLAVCISLLGASA). A propeptide spanning residues 22–27 (IPPLPL) is cleaved from the precursor. 7 disulfides stabilise this stretch: Cys-38/Cys-98, Cys-54/Cys-144, Cys-56/Cys-72, Cys-71/Cys-125, Cys-78/Cys-118, Cys-87/Cys-111, and Cys-105/Cys-116. Residues Tyr-55, Gly-57, and Gly-59 each contribute to the Ca(2+) site. His-75 is a catalytic residue. Asp-76 serves as a coordination point for Ca(2+). The active site involves Asp-119.

The protein belongs to the phospholipase A2 family. Group I subfamily. D49 sub-subfamily. It depends on Ca(2+) as a cofactor. Expressed by the venom gland.

It is found in the secreted. It carries out the reaction a 1,2-diacyl-sn-glycero-3-phosphocholine + H2O = a 1-acyl-sn-glycero-3-phosphocholine + a fatty acid + H(+). Functionally, PLA2 catalyzes the calcium-dependent hydrolysis of the 2-acyl groups in 3-sn-phosphoglycerides. In Laticauda semifasciata (Black-banded sea krait), this protein is Basic phospholipase A2 cPm05.